We begin with the raw amino-acid sequence, 73 residues long: MKSINIQDQFLNQIRKENTFVTVFLLNGFQLRGQVKGFDNFTVLIESEGKQQLIYKHAISTFAPQKNVQLELE.

Residues 8-68 (DQFLNQIRKE…ISTFAPQKNV (61 aa)) enclose the Sm domain.

Belongs to the Hfq family. Homohexamer.

RNA chaperone that binds small regulatory RNA (sRNAs) and mRNAs to facilitate mRNA translational regulation in response to envelope stress, environmental stress and changes in metabolite concentrations. Also binds with high specificity to tRNAs. The protein is RNA-binding protein Hfq of Bacillus licheniformis (strain ATCC 14580 / DSM 13 / JCM 2505 / CCUG 7422 / NBRC 12200 / NCIMB 9375 / NCTC 10341 / NRRL NRS-1264 / Gibson 46).